The following is a 163-amino-acid chain: Cyanate hydratase (163 aa).

Catalysis depends on residues Arg103, Glu106, and Ser129.

It belongs to the cyanase family.

It catalyses the reaction cyanate + hydrogencarbonate + 3 H(+) = NH4(+) + 2 CO2. Catalyzes the reaction of cyanate with bicarbonate to produce ammonia and carbon dioxide. The chain is Cyanate hydratase from Paracoccidioides lutzii (strain ATCC MYA-826 / Pb01) (Paracoccidioides brasiliensis).